The sequence spans 342 residues: MTDRYILAVESSCDETSVAILKNESTLLSNVIASQVESHKRFGGVVPEVASRHHVEVITTCFEDALQEAGISASDLSAVAVTYGPGLVGALLVGLAAAKAFAWANHLPLIPVNHMAGHLMAAREQEPLVYPLIALLVSGGHTELVYVPEPGDYHIIGETRDDAVGEAYDKVGRVMGLTYPAGREIDQLAHKGQDTYHFPRAMITEDHLEFSFSGLKSAFINVHHNAKQKGDELILEDLCASFQAAVLDILLAKTKKALSRYPAKMLVVAGGVAANQGLRDRLAQEITHIEVVIPKLRLCGDNAGMIALAAAIEYDKQHFANMSLNAKPSLAFDQFPDSFVIN.

The Fe cation site is built by histidine 114 and histidine 118. Residues 136 to 140 (LVSGG), aspartate 169, glycine 182, aspartate 186, and asparagine 275 contribute to the substrate site. Aspartate 301 serves as a coordination point for Fe cation.

Belongs to the KAE1 / TsaD family. Fe(2+) serves as cofactor.

It is found in the cytoplasm. The enzyme catalyses L-threonylcarbamoyladenylate + adenosine(37) in tRNA = N(6)-L-threonylcarbamoyladenosine(37) in tRNA + AMP + H(+). In terms of biological role, required for the formation of a threonylcarbamoyl group on adenosine at position 37 (t(6)A37) in tRNAs that read codons beginning with adenine. Is involved in the transfer of the threonylcarbamoyl moiety of threonylcarbamoyl-AMP (TC-AMP) to the N6 group of A37, together with TsaE and TsaB. TsaD likely plays a direct catalytic role in this reaction. This chain is tRNA N6-adenosine threonylcarbamoyltransferase, found in Streptococcus pyogenes serotype M18 (strain MGAS8232).